A 435-amino-acid chain; its full sequence is Phosphomethylpyrimidine synthase (435 aa).

Residues Asn-67, Met-96, Tyr-125, His-163, 185–187 (SRG), 226–229 (DGLR), and Glu-265 contribute to the substrate site. Residue His-269 participates in Zn(2+) binding. Tyr-292 lines the substrate pocket. His-333 is a Zn(2+) binding site. Residues Cys-408, Cys-411, and Cys-415 each contribute to the [4Fe-4S] cluster site.

The protein belongs to the ThiC family. [4Fe-4S] cluster is required as a cofactor.

The enzyme catalyses 5-amino-1-(5-phospho-beta-D-ribosyl)imidazole + S-adenosyl-L-methionine = 4-amino-2-methyl-5-(phosphooxymethyl)pyrimidine + CO + 5'-deoxyadenosine + formate + L-methionine + 3 H(+). The protein operates within cofactor biosynthesis; thiamine diphosphate biosynthesis. Catalyzes the synthesis of the hydroxymethylpyrimidine phosphate (HMP-P) moiety of thiamine from aminoimidazole ribotide (AIR) in a radical S-adenosyl-L-methionine (SAM)-dependent reaction. The sequence is that of Phosphomethylpyrimidine synthase from Thermus thermophilus (strain ATCC 27634 / DSM 579 / HB8).